A 679-amino-acid chain; its full sequence is Shutoff protein (679 aa).

A binding to host EIF4G region spans residues Leu-178–Ser-232. The RRM domain occupies Arg-235–Ala-353. Tyr-252 and Tyr-564 each carry phosphotyrosine; by host. Residues Arg-552–Ser-679 are disordered. Basic and acidic residues predominate over residues Pro-661–Ser-679.

The protein belongs to the adenoviridae shutoff protein family. As to quaternary structure, monomer. Interacts with hexon protein; this interaction allows chaperoning and trimerization of hexon proteins. Interacts (via N-terminus) with host initiation factor EIF4G (via C-terminus). Interacts (via RRM domain) with viral mRNAs that contain the tripartite leader; this interaction allows ribosome shunting and expression of viral late mRNAs. In terms of processing, might be cleaved by the viral protease. Phosphorylated. Tyrosine phosphorylation enhances preferential binding to tripartite leader mRNAs and allows ribosome shunting. Post-translationally, methylated. Asymmetric dimethylation by host PRMT1 of the Arg/Gly-rich region may regulate shutoff protein binding to hexon and promote the capsid assembly in the nucleus.

It localises to the host cytoplasm. Functionally, protein that inhibits host translation while promoting late viral translation by ribosome shunting. Blocks host cap-dependent translation by binding to eIF4G, displacing MKNK1 from cap initiation complexes and preventing EIF4E phosphorylation. Binds to the tripartite leader sequence of viral late mRNAs and recruits host eIF4G, PABPC1/poly-A binding protein and 40S ribosomes subunits on viral mRNAs, allowing ribosome shunting and efficient translation of late viral mRNAs even though conventional translation via ribosome scanning from the cap has been shut off in the host cell. During assembly, acts as a chaperone protein that helps hexon proteins assembly into trimers. The chain is Shutoff protein from Snake adenovirus serotype 1 (SnAdV-1).